A 412-amino-acid chain; its full sequence is Putative competence-damage inducible protein (412 aa).

Belongs to the CinA family.

This is Putative competence-damage inducible protein from Bacillus mycoides (strain KBAB4) (Bacillus weihenstephanensis).